Consider the following 487-residue polypeptide: 2-aminomuconic semialdehyde dehydrogenase (487 aa).

Glycine 231–alanine 236 contacts NAD(+). Glutamate 253 (proton acceptor) is an active-site residue. Cysteine 287 (nucleophile) is an active-site residue.

The protein belongs to the aldehyde dehydrogenase family.

The protein localises to the cytoplasm. It carries out the reaction 2-aminomuconate 6-semialdehyde + NAD(+) + H2O = (2Z,4E)-2-aminomuconate + NADH + 2 H(+). The protein operates within amino-acid degradation; L-kynurenine degradation. In terms of biological role, catalyzes the NAD-dependent oxidation of 2-aminomuconic semialdehyde of the kynurenine metabolic pathway in L-tryptophan degradation. The chain is 2-aminomuconic semialdehyde dehydrogenase (aldh8a1) from Danio rerio (Zebrafish).